Here is a 274-residue protein sequence, read N- to C-terminus: NADH-ubiquinone oxidoreductase chain 2 (274 aa).

The next 8 helical transmembrane spans lie at 28–48, 54–74, 79–99, 107–127, 128–148, 171–191, 206–226, and 254–274; these read MIIM…FWFP, LTWM…LMLI, IKYL…IGGL, LMAF…MFSE, SIWL…TFMF, FTLF…GFLP, FLLT…LRIC, and LIMT…YFMF.

The protein belongs to the complex I subunit 2 family.

It localises to the mitochondrion inner membrane. It carries out the reaction a ubiquinone + NADH + 5 H(+)(in) = a ubiquinol + NAD(+) + 4 H(+)(out). Functionally, core subunit of the mitochondrial membrane respiratory chain NADH dehydrogenase (Complex I) that is believed to belong to the minimal assembly required for catalysis. Complex I functions in the transfer of electrons from NADH to the respiratory chain. The immediate electron acceptor for the enzyme is believed to be ubiquinone. The chain is NADH-ubiquinone oxidoreductase chain 2 (mt:ND2) from Drosophila sechellia (Fruit fly).